The following is a 420-amino-acid chain: UDP-N-acetyl-D-mannosamine dehydrogenase (420 aa).

5 residues coordinate NAD(+): Y13, I14, D33, T85, and T126. Residues R160, V161, K212, N216, R219, H250, R252, and G263 each contribute to the UDP-N-acetyl-alpha-D-mannosaminouronate site. Residue K212 is the Proton donor/acceptor of the active site. Residue C266 is the Nucleophile of the active site. 2 residues coordinate UDP-N-acetyl-alpha-D-mannosaminouronate: F330 and K331. R338 lines the NAD(+) pocket. K416 serves as a coordination point for UDP-N-acetyl-alpha-D-mannosaminouronate.

Belongs to the UDP-glucose/GDP-mannose dehydrogenase family. WecC subfamily. Homodimer.

It carries out the reaction UDP-N-acetyl-alpha-D-mannosamine + 2 NAD(+) + H2O = UDP-N-acetyl-alpha-D-mannosaminouronate + 2 NADH + 3 H(+). It functions in the pathway bacterial outer membrane biogenesis; enterobacterial common antigen biosynthesis. Catalyzes the four-electron oxidation of UDP-N-acetyl-D-mannosamine (UDP-ManNAc), reducing NAD(+) and releasing UDP-N-acetylmannosaminuronic acid (UDP-ManNAcA). The chain is UDP-N-acetyl-D-mannosamine dehydrogenase from Yersinia pestis.